The primary structure comprises 621 residues: MSRQNLVALTVTTLLGVAVGGFVLWKGIQRRRRSKTSPVTQQPQQKVLGSRELPPPEDDQLHSSAPRSSWKERILKAKVVTVSQEAEWDQIEPLLRSELEDFPVLGIDCEWVNLEGKASPLSLLQMASPSGLCVLVRLPKLICGGKTLPRTLLDILADGTILKVGVGCSEDASKLLQDYGLVVRGCLDLRYLAMRQRNNLLCNGLSLKSLAETVLNFPLDKSLLLRCSNWDAETLTEDQVIYAARDAQISVALFLHLLGYPFSRNSPGEKNDDHSSWRKVLEKCQGVVDIPFRSKGMSRLGEEVNGEATESQQKPRNKKSKMDGMVPGNHQGRDPRKHKRKPLGVGYSARKSPLYDNCFLHAPDGQPLCTCDRRKAQWYLDKGIGELVSEEPFVVKLRFEPAGRPESPGDYYLMVKENLCVVCGKRDSYIRKNVIPHEYRKHFPIEMKDHNSHDVLLLCTSCHAISNYYDNHLKQQLAKEFQAPIGSEEGLRLLEDPERRQVRSGARALLNAESLPTQRKEELLQALREFYNTDVVTEEMLQEAASLETRISNENYVPHGLKVVQCHSQGGLRSLMQLESRWRQHFLDSMQPKHLPQQWSVDHNHQKLLRKFGEDLPIQLS.

Residues 1 to 4 (MSRQ) are Mitochondrial intermembrane-facing. The chain crosses the membrane as a helical span at residues 5 to 25 (NLVALTVTTLLGVAVGGFVLW). Over 26–621 (KGIQRRRRSK…FGEDLPIQLS (596 aa)) the chain is Cytoplasmic. Positions 34-68 (SKTSPVTQQPQQKVLGSRELPPPEDDQLHSSAPRS) are disordered. Polar residues predominate over residues 36–47 (TSPVTQQPQQKV). Residues Asp108, Glu110, and Asp246 each contribute to the a divalent metal cation site. One can recognise a 3'-5' exonuclease domain in the interval 155 to 247 (ILADGTILKV…DQVIYAARDA (93 aa)). The segment at 299–343 (RLGEEVNGEATESQQKPRNKKSKMDGMVPGNHQGRDPRKHKRKPL) is disordered.

Belongs to the EXD2 family. In terms of assembly, homodimer. Interacts with RBBP8, MRE11 and BRCA1. Mg(2+) serves as cofactor. It depends on Mn(2+) as a cofactor.

The protein resides in the mitochondrion outer membrane. The protein localises to the mitochondrion matrix. Its subcellular location is the nucleus. It localises to the chromosome. The catalysed reaction is Exonucleolytic cleavage in the 3'- to 5'-direction to yield nucleoside 5'-phosphates.. In terms of biological role, exonuclease that has both 3'-5' exoribonuclease and exodeoxyribonuclease activities, depending on the divalent metal cation used as cofactor. In presence of Mg(2+), only shows 3'-5' exoribonuclease activity, while it shows both exoribonuclease and exodeoxyribonuclease activities in presence of Mn(2+). Acts as an exoribonuclease in mitochondrion, possibly by regulating ATP production and mitochondrial translation. Also involved in the response to DNA damage. Acts as 3'-5' exodeoxyribonuclease for double-strand breaks resection and efficient homologous recombination. Plays a key role in controlling the initial steps of chromosomal break repair, it is recruited to chromatin in a damage-dependent manner and functionally interacts with the MRN complex to accelerate resection through its 3'-5' exonuclease activity, which efficiently processes double-stranded DNA substrates containing nicks. Also involved in response to replicative stress: recruited to stalled forks and is required to stabilize and restart stalled replication forks by restraining excessive fork regression, thereby suppressing their degradation. The protein is Exonuclease 3'-5' domain-containing protein 2 of Homo sapiens (Human).